Consider the following 103-residue polypeptide: Large ribosomal subunit protein bL21 (103 aa).

This sequence belongs to the bacterial ribosomal protein bL21 family. Part of the 50S ribosomal subunit. Contacts protein L20.

Its function is as follows. This protein binds to 23S rRNA in the presence of protein L20. The sequence is that of Large ribosomal subunit protein bL21 from Actinobacillus succinogenes (strain ATCC 55618 / DSM 22257 / CCUG 43843 / 130Z).